A 101-amino-acid chain; its full sequence is YcgL domain-containing protein ABBFA_001807 (101 aa).

In terms of domain architecture, YcgL spans 1–92 (MHCDIYRSSK…PPEGLINPNA (92 aa)).

The sequence is that of YcgL domain-containing protein ABBFA_001807 from Acinetobacter baumannii (strain AB307-0294).